Reading from the N-terminus, the 396-residue chain is Elongation factor Tu (396 aa).

The tr-type G domain occupies 10 to 206 (KPHCNIGTIG…AVDAYIPQPE (197 aa)). Residues 19–26 (GHVDHGKT) are G1. 19 to 26 (GHVDHGKT) serves as a coordination point for GTP. Threonine 26 lines the Mg(2+) pocket. A G2 region spans residues 60–64 (GITIS). The segment at 81-84 (DCPG) is G3. Residues 81 to 85 (DCPGH) and 136 to 139 (NKCD) each bind GTP. Positions 136-139 (NKCD) are G4. Residues 174-176 (SAL) are G5.

It belongs to the TRAFAC class translation factor GTPase superfamily. Classic translation factor GTPase family. EF-Tu/EF-1A subfamily. In terms of assembly, monomer.

It localises to the cytoplasm. The catalysed reaction is GTP + H2O = GDP + phosphate + H(+). Its function is as follows. GTP hydrolase that promotes the GTP-dependent binding of aminoacyl-tRNA to the A-site of ribosomes during protein biosynthesis. The protein is Elongation factor Tu of Nitrobacter hamburgensis (strain DSM 10229 / NCIMB 13809 / X14).